The primary structure comprises 513 residues: MAGGAMTDTDGAHKNYPGKMTIFVFLACLVASSGGLIFGYDIGISGGVTSMDSFLIKFFPSVYAKEKEMVETNQYCKFDSELLTLFTSSLYLAALIASLFASVITRKFGRRITMLGGGVIFLVGAILNGAAADVAMLIIGRILLGIGVGFSNQAVPLYLSEMAPARMRGMLNISFQLMITVGILAANLINYFTDKIAGGWGWRVSLGLAAVPAVIMAGGSLFLPDTPNSLLSRGKENEARAMLRRIRGTDDVGPEYDDLVAASEASKAIENPWRTLLERRYRPQLVMSVLIPTLQQLTGINVVMFYAPVLFKTIGFGGTASLMSAVITGLVNMFATFVSIATVDRLGRRKLLLQGGVQMIFAQFILGTLIAVKFGTAGVANISRGYAIVVVLCICVFVSAFAWSWGPLGWLVPSEIFPLEIRSAAQSVVVVFNMAFTFIIAQIFLMMLCHLKFGLFYFFGAMELIMTGFVFFFLPETKGIPIEEMDRIWGKHWYWRRFVGAGAGGKVEITSTV.

The Cytoplasmic segment spans residues 1–17; that stretch reads MAGGAMTDTDGAHKNYP. The chain crosses the membrane as a helical span at residues 18 to 38; sequence GKMTIFVFLACLVASSGGLIF. Residues 39–81 lie on the Extracellular side of the membrane; sequence GYDIGISGGVTSMDSFLIKFFPSVYAKEKEMVETNQYCKFDSE. The helical transmembrane segment at 82–102 threads the bilayer; the sequence is LLTLFTSSLYLAALIASLFAS. Residues 103–116 are Cytoplasmic-facing; that stretch reads VITRKFGRRITMLG. The helical transmembrane segment at 117–137 threads the bilayer; sequence GGVIFLVGAILNGAAADVAML. Over 138–139 the chain is Extracellular; it reads II. Residues 140 to 160 form a helical membrane-spanning segment; that stretch reads GRILLGIGVGFSNQAVPLYLS. The Cytoplasmic portion of the chain corresponds to 161 to 166; the sequence is EMAPAR. The chain crosses the membrane as a helical span at residues 167–187; it reads MRGMLNISFQLMITVGILAAN. Residues 188-201 are Extracellular-facing; sequence LINYFTDKIAGGWG. A helical membrane pass occupies residues 202–222; sequence WRVSLGLAAVPAVIMAGGSLF. The Cytoplasmic segment spans residues 223 to 294; sequence LPDTPNSLLS…LVMSVLIPTL (72 aa). Residues 295-315 form a helical membrane-spanning segment; that stretch reads QQLTGINVVMFYAPVLFKTIG. The Extracellular portion of the chain corresponds to 316–320; it reads FGGTA. Residues 321–341 form a helical membrane-spanning segment; that stretch reads SLMSAVITGLVNMFATFVSIA. Residues 342 to 347 are Cytoplasmic-facing; that stretch reads TVDRLG. Residues 348 to 368 traverse the membrane as a helical segment; that stretch reads RRKLLLQGGVQMIFAQFILGT. Over 369–385 the chain is Extracellular; the sequence is LIAVKFGTAGVANISRG. Residues 386–406 traverse the membrane as a helical segment; sequence YAIVVVLCICVFVSAFAWSWG. Over 407 to 425 the chain is Cytoplasmic; sequence PLGWLVPSEIFPLEIRSAA. A helical transmembrane segment spans residues 426 to 446; the sequence is QSVVVVFNMAFTFIIAQIFLM. The Extracellular portion of the chain corresponds to 447–450; the sequence is MLCH. Residues 451-471 traverse the membrane as a helical segment; the sequence is LKFGLFYFFGAMELIMTGFVF. Residues 472-512 are Cytoplasmic-facing; it reads FFLPETKGIPIEEMDRIWGKHWYWRRFVGAGAGGKVEITST.

Belongs to the major facilitator superfamily. Sugar transporter (TC 2.A.1.1) family. In terms of tissue distribution, expressed specifically in anthers.

The protein localises to the membrane. In terms of biological role, mediates active uptake of hexoses by sugar:proton symport. May play an important role in transporting monosaccharides during anther development. The sequence is that of Sugar transport protein MST8 from Oryza sativa subsp. japonica (Rice).